We begin with the raw amino-acid sequence, 352 residues long: Homeobox protein Mohawk (352 aa).

A disordered region spans residues 19–54 (GASERERGGRPYSGVLDSPHARPEVGIPDGPPLKDN). The homeobox; TALE-type DNA-binding region spans 71–132 (VRHKRQALQD…NARRRLKNTV (62 aa)). 2 disordered regions span residues 159 to 189 (VSSD…VHHP) and 245 to 301 (TRQR…PSKD).

Belongs to the TALE/IRO homeobox family.

It localises to the nucleus. In terms of biological role, may act as a morphogenetic regulator of cell adhesion. This Homo sapiens (Human) protein is Homeobox protein Mohawk (MKX).